The chain runs to 426 residues: C4-dicarboxylate transport protein (426 aa).

A run of 8 helical transmembrane segments spans residues 8–28, 44–64, 78–98, 148–168, 184–204, 222–242, 297–317, and 355–375; these read VLYVQVIVAIIIGIALGHFYP, LIKMVIGPIIFCTVVTGIAGM, LLYFEIVSTFALILGLAATHL, GEILQILLIALLFGAVLAHVG, ILFGMVGIITKLAPIGAFGAM, LIGTFYLTSIVFVVVVLGFIA, GYSFNLDGTNIYMTMAVLFIA, and AATLAVVPTIPLSGMVLILGI.

Belongs to the dicarboxylate/amino acid:cation symporter (DAACS) (TC 2.A.23) family.

The protein resides in the cell inner membrane. Its function is as follows. Responsible for the transport of dicarboxylates such as succinate, fumarate, and malate from the periplasm across the membrane. In Paraburkholderia phymatum (strain DSM 17167 / CIP 108236 / LMG 21445 / STM815) (Burkholderia phymatum), this protein is C4-dicarboxylate transport protein.